Reading from the N-terminus, the 500-residue chain is MNYFPWLTIIIVLPIFAGFLILFLPHRGNKVIRWYTLCICIIELLLTTYAFGYHFQLDDPLIQLAEDYKWIDFLDFSWRLGIDGISIGPILLTGFITTLATLAARPVTRESRVFHFLMLAMYSGQIGPFSSQNLLLFFIMWELELIPVYLLLSMWGGKKRLYSATKFILYTAGSSAFLLVGILGICLSASNEPTLNFETSANQSYPVALEMLFYIGFFIAFAVKSPIIPLHTWLPDTHGEAHYSTCMLLAGILLKMGAYGLVRINMELLPHAHSIFSPWLMIVGTIQIIYAASTSPGQRNLKKRIAYSSVSHMGFIIIGLGSINDTGLNGAILQIISHGFIGAALFFLAGTSYDRIRLVYLDEMGGMAITIPKIFTTFSILSMASLALPGMSGFVAELILFFGILTSQKYLLMTKILITFVMAIGMILTPIYSLSMLRQMFYGYKLFTATNSYFVDSGPREFFVSISILLPVIAIGIYPDFVFSLSVDKVEALLSNYFYP.

14 helical membrane passes run F4–L24, L37–L57, G84–A104, S111–F129, L134–M154, F167–L187, A208–I228, H242–V262, A272–A292, I305–D325, G330–G350, L386–T406, I416–M436, and F462–V482.

This sequence belongs to the complex I subunit 4 family.

The protein localises to the plastid. It localises to the chloroplast thylakoid membrane. It catalyses the reaction a plastoquinone + NADH + (n+1) H(+)(in) = a plastoquinol + NAD(+) + n H(+)(out). The catalysed reaction is a plastoquinone + NADPH + (n+1) H(+)(in) = a plastoquinol + NADP(+) + n H(+)(out). The chain is NAD(P)H-quinone oxidoreductase chain 4, chloroplastic from Morus indica (Mulberry).